Reading from the N-terminus, the 112-residue chain is UPF0342 protein SUB0718 (112 aa).

This sequence belongs to the UPF0342 family.

The protein is UPF0342 protein SUB0718 of Streptococcus uberis (strain ATCC BAA-854 / 0140J).